We begin with the raw amino-acid sequence, 427 residues long: Histidine--tRNA ligase (427 aa).

Belongs to the class-II aminoacyl-tRNA synthetase family. In terms of assembly, homodimer.

The protein resides in the cytoplasm. The catalysed reaction is tRNA(His) + L-histidine + ATP = L-histidyl-tRNA(His) + AMP + diphosphate + H(+). This Aster yellows witches'-broom phytoplasma (strain AYWB) protein is Histidine--tRNA ligase.